Consider the following 633-residue polypeptide: ABC transporter G family member 1 (633 aa).

The ABC transporter domain occupies 23–265 (LTWEDLWVTA…FALSGFPCPT (243 aa)). 60–67 (GPSGSGKS) serves as a coordination point for ATP. Positions 340 to 552 (TQSLVLTRRS…AYEGMFKNEF (213 aa)) constitute an ABC transmembrane type-2 domain. Asn352 carries N-linked (GlcNAc...) asparagine glycosylation. Transmembrane regions (helical) follow at residues 364 to 384 (LAVYVVIAVGLGSLYYDVGFS), 394 to 414 (MLMFVASFITFMAIGGFPSFV), 440 to 460 (LSAMPYLLLVSLIPGAIAYFM), 470 to 490 (FIYFALVLFTCMMIVESLMMI), 498 to 518 (FLMGLIAGAGIQALMLLSGGF), and 580 to 600 (IDLVILLGMLVLYRVLFLLVV).

The protein belongs to the ABC transporter superfamily. ABCG family. In terms of assembly, homodimer. Restricted to the petals, with the highest expression in the limb and, to a lesser extent, in petal tubes, probably in both epidermal and mesophyll cell layers.

Its subcellular location is the cell membrane. Functionally, ABC transporter controlling the release of volatile organic compounds (VOCs), including floral volatile benzenoids and phenylpropanoids (FVBP), in flowers of fragrant cultivars (e.g. cv. Mitchell and cv. V26). This scent, mostly produced in the evening and night by the petals, attracts the pollinators (e.g. the night-active hawkmoth pollinator Manduca sexta). The chain is ABC transporter G family member 1 from Petunia hybrida (Petunia).